A 516-amino-acid chain; its full sequence is 2-isopropylmalate synthase (516 aa).

The Pyruvate carboxyltransferase domain maps to 8–270 (IYIFDTTLRD…YTGIKTESIY (263 aa)). Mn(2+) is bound by residues Asp17, His205, His207, and Asn241. A regulatory domain region spans residues 394 to 516 (KLIYLNVVSG…DAGKIKSEYE (123 aa)).

This sequence belongs to the alpha-IPM synthase/homocitrate synthase family. LeuA type 1 subfamily. Homodimer. Mn(2+) is required as a cofactor.

The protein localises to the cytoplasm. The catalysed reaction is 3-methyl-2-oxobutanoate + acetyl-CoA + H2O = (2S)-2-isopropylmalate + CoA + H(+). The protein operates within amino-acid biosynthesis; L-leucine biosynthesis; L-leucine from 3-methyl-2-oxobutanoate: step 1/4. Functionally, catalyzes the condensation of the acetyl group of acetyl-CoA with 3-methyl-2-oxobutanoate (2-ketoisovalerate) to form 3-carboxy-3-hydroxy-4-methylpentanoate (2-isopropylmalate). This Syntrophus aciditrophicus (strain SB) protein is 2-isopropylmalate synthase.